The following is a 156-amino-acid chain: UPF0460 protein in nifX 3'region (156 aa).

Belongs to the UPF0460 family.

The protein is UPF0460 protein in nifX 3'region of Rhodobacter capsulatus (Rhodopseudomonas capsulata).